A 131-amino-acid polypeptide reads, in one-letter code: Small ribosomal subunit protein uS11 (131 aa).

The protein belongs to the universal ribosomal protein uS11 family. In terms of assembly, part of the 30S ribosomal subunit. Interacts with proteins S7 and S18. Binds to IF-3.

In terms of biological role, located on the platform of the 30S subunit, it bridges several disparate RNA helices of the 16S rRNA. Forms part of the Shine-Dalgarno cleft in the 70S ribosome. In Helicobacter pylori (strain Shi470), this protein is Small ribosomal subunit protein uS11.